The sequence spans 242 residues: uncharacterized protein (242 aa).

It localises to the cytoplasm. Its subcellular location is the nucleus. This is an uncharacterized protein from Schizosaccharomyces pombe (strain 972 / ATCC 24843) (Fission yeast).